Here is a 397-residue protein sequence, read N- to C-terminus: Digeranylgeranylglycerophospholipid reductase (397 aa).

Positions 15, 34, 45, 46, 48, 101, 125, 163, 284, 296, and 297 each coordinate FAD. Residues K339 and V375 each contribute to the a 2,3-bis-O-(geranylgeranyl)-sn-glycerol 1-phospholipid site.

Belongs to the geranylgeranyl reductase family. DGGGPL reductase subfamily. It depends on FAD as a cofactor.

The catalysed reaction is 2,3-bis-O-(phytanyl)-sn-glycerol 1-phosphate + 8 NADP(+) = 2,3-bis-O-(geranylgeranyl)-sn-glycerol 1-phosphate + 8 NADPH + 8 H(+). It carries out the reaction 2,3-bis-O-(phytanyl)-sn-glycerol 1-phosphate + 8 NAD(+) = 2,3-bis-O-(geranylgeranyl)-sn-glycerol 1-phosphate + 8 NADH + 8 H(+). It catalyses the reaction a 2,3-bis-O-phytanyl-sn-glycerol 1-phospholipid + 8 A = a 2,3-bis-O-(geranylgeranyl)-sn-glycerol 1-phospholipid + 8 AH2. The enzyme catalyses CDP-2,3-bis-O-(geranylgeranyl)-sn-glycerol + 8 AH2 = CDP-2,3-bis-O-(phytanyl)-sn-glycerol + 8 A. The catalysed reaction is archaetidylserine + 8 AH2 = 2,3-bis-O-phytanyl-sn-glycero-3-phospho-L-serine + 8 A. The protein operates within membrane lipid metabolism; glycerophospholipid metabolism. Is involved in the reduction of 2,3-digeranylgeranylglycerophospholipids (unsaturated archaeols) into 2,3-diphytanylglycerophospholipids (saturated archaeols) in the biosynthesis of archaeal membrane lipids. Catalyzes the formation of archaetidic acid (2,3-di-O-phytanyl-sn-glyceryl phosphate) from 2,3-di-O-geranylgeranylglyceryl phosphate (DGGGP) via the hydrogenation of each double bond of the isoprenoid chains. Is also probably able to reduce double bonds of geranyl groups in CDP-2,3-bis-O-(geranylgeranyl)-sn-glycerol and archaetidylserine, thus acting at various stages in the biosynthesis of archaeal membrane lipids. The chain is Digeranylgeranylglycerophospholipid reductase from Picrophilus torridus (strain ATCC 700027 / DSM 9790 / JCM 10055 / NBRC 100828 / KAW 2/3).